The primary structure comprises 406 residues: Accessory Sec system protein translocase subunit SecY2 (406 aa).

Transmembrane regions (helical) follow at residues 14–34, 63–83, 108–128, 131–151, 156–176, 190–210, 246–266, 285–305, 344–364, and 368–388; these read SWTV…LPFI, FSLF…WQMF, FAIA…EVGI, GLAI…LVWL, SFFG…ANLP, LPII…AVIV, FMYA…IQIL, PIWL…FAFV, AVIG…IVLI, and YLQL…VYNV.

The protein belongs to the SecY/SEC61-alpha family. SecY2 subfamily. In terms of assembly, component of the accessory SecA2/SecY2 protein translocase complex required to export cell wall proteins. May form heterotrimers with SecE and SecG subunits.

It is found in the cell membrane. In terms of biological role, part of the accessory SecA2/SecY2 system specifically required for export of possible cell wall proteins. The central subunit of a protein translocation channel. The chain is Accessory Sec system protein translocase subunit SecY2 from Streptococcus salivarius (strain CCHSS3).